We begin with the raw amino-acid sequence, 202 residues long: Small ribosomal subunit protein uS4 (202 aa).

Positions 91-168 constitute an S4 RNA-binding domain; it reads SMLSSVLYNS…QKVPDYLEVD (78 aa).

The protein belongs to the universal ribosomal protein uS4 family. Part of the 30S ribosomal subunit. Contacts protein S5. The interaction surface between S4 and S5 is involved in control of translational fidelity.

Its function is as follows. One of the primary rRNA binding proteins, it binds directly to 16S rRNA where it nucleates assembly of the body of the 30S subunit. With S5 and S12 plays an important role in translational accuracy. The chain is Small ribosomal subunit protein uS4 from Ehrlichia ruminantium (strain Welgevonden).